The chain runs to 537 residues: MGETKYIFVTGGVASSLGKGIISSSIGKLLQARGYNVTIQKFDPYINIDPGTLNPYEHGECYVTVDGHEADLDLGHYERFLGIQTTKANNITTGRIYKSVIDKERRGDYLGKTIQVIPHITDEIKRNVKLLGNKYKFDFVITEIGGTVGDIESLPYLESIRQLKWELGKNALCVHLTYVPYLAAAGELKTKPTQHSVKELQSVGIQPDVLVLRAEHPLSDGLRKKVAQFCNVDDKAVVQSIDAETIYEVPLLMQAQGLDSTILEKMGLPVGETPGLGPWRKFLERRHAAETKEPINIALVGKYDLQDAYKSIREALSQAGTYNDRKVEVHFVNSEKLTDENVAEALKGMAGVMIGPGFGQRGIDGKFVAIKYTRTHDIPTFGICLGMQCIAIEFARNVLGYADADSREMDEKTPHNVIDIMEEQKAITNMGGTMRLGAYECVLQKGSKAYLAYGEEHIQERHRHRYEFNNDYKAQYEAAGMKCVGINPESDLVEIVEIPALKWFIGTQFHPEYSSTVLNPHPLFVAFVKAAIENEKN.

The tract at residues 1-268 (MGETKYIFVT…DSTILEKMGL (268 aa)) is amidoligase domain. CTP is bound at residue S15. UTP is bound at residue S15. 16-21 (SLGKGI) serves as a coordination point for ATP. Y56 provides a ligand contact to L-glutamine. D73 lines the ATP pocket. The Mg(2+) site is built by D73 and E143. Residues 150 to 152 (DIE), 189 to 194 (KTKPTQ), and K225 each bind CTP. Residues 189 to 194 (KTKPTQ) and K225 each bind UTP. Residues 296–537 (NIALVGKYDL…VKAAIENEKN (242 aa)) enclose the Glutamine amidotransferase type-1 domain. G357 lines the L-glutamine pocket. C384 (nucleophile; for glutamine hydrolysis) is an active-site residue. L-glutamine-binding positions include 385–388 (LGMQ), E408, and R465. Residues H510 and E512 contribute to the active site.

Belongs to the CTP synthase family. As to quaternary structure, homotetramer.

The catalysed reaction is UTP + L-glutamine + ATP + H2O = CTP + L-glutamate + ADP + phosphate + 2 H(+). It catalyses the reaction L-glutamine + H2O = L-glutamate + NH4(+). The enzyme catalyses UTP + NH4(+) + ATP = CTP + ADP + phosphate + 2 H(+). It participates in pyrimidine metabolism; CTP biosynthesis via de novo pathway; CTP from UDP: step 2/2. With respect to regulation, allosterically activated by GTP, when glutamine is the substrate; GTP has no effect on the reaction when ammonia is the substrate. The allosteric effector GTP functions by stabilizing the protein conformation that binds the tetrahedral intermediate(s) formed during glutamine hydrolysis. Inhibited by the product CTP, via allosteric rather than competitive inhibition. In terms of biological role, catalyzes the ATP-dependent amination of UTP to CTP with either L-glutamine or ammonia as the source of nitrogen. Regulates intracellular CTP levels through interactions with the four ribonucleotide triphosphates. The sequence is that of CTP synthase from Bacteroides thetaiotaomicron (strain ATCC 29148 / DSM 2079 / JCM 5827 / CCUG 10774 / NCTC 10582 / VPI-5482 / E50).